The primary structure comprises 81 residues: Acyl carrier protein (81 aa).

One can recognise a Carrier domain in the interval 5–80 (EEIFSKVKSI…DIVSYIEKKL (76 aa)). S40 carries the post-translational modification O-(pantetheine 4'-phosphoryl)serine.

It belongs to the acyl carrier protein (ACP) family. Post-translationally, 4'-phosphopantetheine is transferred from CoA to a specific serine of apo-ACP by AcpS. This modification is essential for activity because fatty acids are bound in thioester linkage to the sulfhydryl of the prosthetic group.

It is found in the cytoplasm. The protein operates within lipid metabolism; fatty acid biosynthesis. In terms of biological role, carrier of the growing fatty acid chain in fatty acid biosynthesis. The sequence is that of Acyl carrier protein from Thermotoga maritima (strain ATCC 43589 / DSM 3109 / JCM 10099 / NBRC 100826 / MSB8).